A 453-amino-acid polypeptide reads, in one-letter code: Glutamyl-tRNA(Gln) amidotransferase subunit A (453 aa).

Residues Lys56 and Ser131 each act as charge relay system in the active site. Ser155 serves as the catalytic Acyl-ester intermediate.

The protein belongs to the amidase family. GatA subfamily. Heterotrimer of A, B and C subunits.

The enzyme catalyses L-glutamyl-tRNA(Gln) + L-glutamine + ATP + H2O = L-glutaminyl-tRNA(Gln) + L-glutamate + ADP + phosphate + H(+). In terms of biological role, allows the formation of correctly charged Gln-tRNA(Gln) through the transamidation of misacylated Glu-tRNA(Gln) in organisms which lack glutaminyl-tRNA synthetase. The reaction takes place in the presence of glutamine and ATP through an activated gamma-phospho-Glu-tRNA(Gln). The polypeptide is Glutamyl-tRNA(Gln) amidotransferase subunit A (Campylobacter fetus subsp. fetus (strain 82-40)).